Reading from the N-terminus, the 2415-residue chain is Spectrin alpha chain (2415 aa).

Spectrin repeat units follow at residues 48–150 (RFQY…KLQQ), 154–254 (LVQF…QEKL), 258–362 (HEIQ…KLDE), 366–464 (LHRF…DRRI), 471–574 (DLQL…LLED), 577–679 (RYQQ…KLNE), 683–784 (QQQF…QHLL), 788–890 (QVQQ…QDLD), and 894–963 (QAHQ…RQQE). In terms of domain architecture, SH3 spans 970-1029 (TGKECVVALYDYTEKSPREVSMKKGDVLTLLNSNNKDWWKVEVNDRQGFVPAAYIKKIDA). Phosphoserine occurs at positions 1032 and 1034. Spectrin repeat units lie at residues 1079–1177 (VREA…ASQL), 1181–1284 (HEVQ…EKLL), 1287–1391 (YDLQ…QLEQ), 1394–1496 (DLQL…SRLG), 1500–1604 (TLQQ…KLKE), 1608–1710 (QRTY…RLNE), 1714–1816 (LHQF…KLDE), 1820–1921 (YQQF…GALL), 1926–2028 (YLQF…DRLL), 2040–2141 (LYLT…DGEL), and 2154–2252 (LRKE…NLEQ). EF-hand domains lie at 2265–2300 (DSLK…LGYD) and 2308–2343 (QPDP…KETE). Residues Asp2278, Asp2280, Ser2282, Lys2284, Glu2289, Asp2321, Asn2323, Asp2325, Tyr2327, and Glu2332 each contribute to the Ca(2+) site.

Belongs to the spectrin family. In terms of assembly, native spectrin molecule is a tetramer composed of two antiparallel heterodimers joined head to head so that each end of the native molecule includes the C-terminus of the alpha subunit and the N-terminus of the beta subunit. Interacts with calmodulin in a calcium-dependent manner, interacts with F-actin and also interacts with Lva. Interacts with Ten-m. A substantial pool of maternal protein in the egg undergoes dynamic changes in distribution early in embryogenesis. In gastrulated embryo, the highest level of protein is found in the respiratory tract cells and the lowest in parts of the forming gut.

The protein resides in the cytoplasm. The protein localises to the cytoskeleton. It is found in the golgi apparatus. Its subcellular location is the cell projection. It localises to the cilium. The protein resides in the flagellum. Its function is as follows. Spectrin is the major constituent of the cytoskeletal network underlying the erythrocyte plasma membrane. It associates with band 4.1 and actin to form the cytoskeletal superstructure of the erythrocyte plasma membrane. Essential for larval survival and development. Stabilizes cell to cell interactions that are critical for the maintenance of cell shape and subcellular organization within embryonic tissues. Lva and spectrin may form a Golgi-based scaffold that mediates interaction of Golgi bodies with microtubules and facilitates Golgi-derived membrane secretion required for the formation of furrows during cellularization. The protein is Spectrin alpha chain (alpha-Spec) of Drosophila melanogaster (Fruit fly).